The chain runs to 119 residues: MKLLALLCILIWLSQPGLNRPLSIFYTKQNLPRTYTPPVRELEYWCTYGKHCDFCWECRNGICKNKVWDDMPLIKQNDYISQCSIARYFDRCMYFIKPKSPYIHYMDCSQPIVYKGFSH.

The first 16 residues, 1–16 (MKLLALLCILIWLSQP), serve as a signal peptide directing secretion.

This sequence belongs to the asfivirus MGF 110 family.

This chain is Protein MGF 110-13L-B, found in Ornithodoros (relapsing fever ticks).